A 234-amino-acid chain; its full sequence is Orotidine 5'-phosphate decarboxylase (234 aa).

Residues Asp-10, Lys-31, 58 to 67 (DLKLHDIPNT), Thr-121, Arg-183, Gln-192, Gly-212, and Arg-213 each bind substrate. The active-site Proton donor is the Lys-60.

This sequence belongs to the OMP decarboxylase family. Type 1 subfamily. Homodimer.

The enzyme catalyses orotidine 5'-phosphate + H(+) = UMP + CO2. Its pathway is pyrimidine metabolism; UMP biosynthesis via de novo pathway; UMP from orotate: step 2/2. Functionally, catalyzes the decarboxylation of orotidine 5'-monophosphate (OMP) to uridine 5'-monophosphate (UMP). In Lysinibacillus sphaericus (strain C3-41), this protein is Orotidine 5'-phosphate decarboxylase.